Here is a 573-residue protein sequence, read N- to C-terminus: NADH-ubiquinone oxidoreductase chain 5 (573 aa).

A run of 16 helical transmembrane segments spans residues 4 to 24, 44 to 64, 85 to 105, 106 to 126, 147 to 167, 170 to 190, 212 to 234, 239 to 259, 268 to 288, 294 to 314, 337 to 357, 377 to 396, 422 to 442, 452 to 472, 487 to 507, and 552 to 572; these read ISFI…LYYL, IVMT…VLMI, FIML…SPNL, VSIL…VIYF, VALL…YIFY, VMQN…AAMT, SALV…FNIV, WLGQ…GLGA, IIAL…SMGF, FHLL…GAII, SACF…AGFY, FLYF…LVYY, LGLL…IFPF, LKML…LISI, LTLF…GMIF, and LKIY…FLLF.

It belongs to the complex I subunit 5 family.

The protein resides in the mitochondrion inner membrane. The enzyme catalyses a ubiquinone + NADH + 5 H(+)(in) = a ubiquinol + NAD(+) + 4 H(+)(out). Its function is as follows. Core subunit of the mitochondrial membrane respiratory chain NADH dehydrogenase (Complex I) that is believed to belong to the minimal assembly required for catalysis. Complex I functions in the transfer of electrons from NADH to the respiratory chain. The immediate electron acceptor for the enzyme is believed to be ubiquinone. The chain is NADH-ubiquinone oxidoreductase chain 5 (mt:ND5) from Drosophila yakuba (Fruit fly).